The sequence spans 117 residues: MRVKGGTVTRARRKRIMKLAKGYTGSKHRLFKTAKDQVMKSYTYAFRDRKVNKRNFRELWIARINAGARMNGLSYSKLMHGLKLANIDINRKMLADLAVNDADAFKAVVDEAKKALN.

The protein belongs to the bacterial ribosomal protein bL20 family.

Its function is as follows. Binds directly to 23S ribosomal RNA and is necessary for the in vitro assembly process of the 50S ribosomal subunit. It is not involved in the protein synthesizing functions of that subunit. This is Large ribosomal subunit protein bL20 from Limosilactobacillus fermentum (strain NBRC 3956 / LMG 18251) (Lactobacillus fermentum).